The primary structure comprises 458 residues: Argininosuccinate lyase (458 aa).

Belongs to the lyase 1 family. Argininosuccinate lyase subfamily.

The protein localises to the cytoplasm. The catalysed reaction is 2-(N(omega)-L-arginino)succinate = fumarate + L-arginine. It participates in amino-acid biosynthesis; L-arginine biosynthesis; L-arginine from L-ornithine and carbamoyl phosphate: step 3/3. This is Argininosuccinate lyase from Glaesserella parasuis serovar 5 (strain SH0165) (Haemophilus parasuis).